Reading from the N-terminus, the 331-residue chain is Ferredoxin--NADP reductase 2 (331 aa).

FAD is bound by residues Glu-37, Gln-45, Tyr-50, Val-90, Phe-124, Asp-285, and Thr-326.

Belongs to the ferredoxin--NADP reductase type 2 family. In terms of assembly, homodimer. The cofactor is FAD.

It catalyses the reaction 2 reduced [2Fe-2S]-[ferredoxin] + NADP(+) + H(+) = 2 oxidized [2Fe-2S]-[ferredoxin] + NADPH. This Bacillus velezensis (strain DSM 23117 / BGSC 10A6 / LMG 26770 / FZB42) (Bacillus amyloliquefaciens subsp. plantarum) protein is Ferredoxin--NADP reductase 2.